Reading from the N-terminus, the 254-residue chain is MSVSVERFGQGPDLVLLHGWGMNGAVWHGIVPALASRYRVHLVDLPGFGNSPLAGEVEYSLPWLAEEVAAILPEQCHLLGWSLGGLVASQLALSHPERLHSLITVASSPCFMARDEWPGIAPKVLAGFNQMLAGDFKQTIERFLAIQAMGSEHARDDIRQLRHWLAERPAPQLAALEAGLGLLAEVDLRDELTPLSLPWLRVYGRLDSLVPKASIPLLDERYPSSRSVVLEKASHAPFISHPQQFIEIIEHFVG.

The AB hydrolase-1 domain occupies 14–242 (LVLLHGWGMN…ASHAPFISHP (229 aa)). Residues W20, 82–83 (SL), and 143–147 (FLAIQ) each bind substrate. Catalysis depends on S82, which acts as the Nucleophile. Residues D207 and H235 contribute to the active site. Substrate is bound at residue H235.

The protein belongs to the AB hydrolase superfamily. Carboxylesterase BioH family. In terms of assembly, monomer.

It is found in the cytoplasm. The enzyme catalyses 6-carboxyhexanoyl-[ACP] methyl ester + H2O = 6-carboxyhexanoyl-[ACP] + methanol + H(+). Its pathway is cofactor biosynthesis; biotin biosynthesis. The physiological role of BioH is to remove the methyl group introduced by BioC when the pimeloyl moiety is complete. It allows to synthesize pimeloyl-ACP via the fatty acid synthetic pathway through the hydrolysis of the ester bonds of pimeloyl-ACP esters. The chain is Pimeloyl-[acyl-carrier protein] methyl ester esterase from Aeromonas hydrophila subsp. hydrophila (strain ATCC 7966 / DSM 30187 / BCRC 13018 / CCUG 14551 / JCM 1027 / KCTC 2358 / NCIMB 9240 / NCTC 8049).